The primary structure comprises 564 residues: 2-succinyl-5-enolpyruvyl-6-hydroxy-3-cyclohexene-1-carboxylate synthase (564 aa).

Belongs to the TPP enzyme family. MenD subfamily. In terms of assembly, homodimer. Requires Mg(2+) as cofactor. The cofactor is Mn(2+). Thiamine diphosphate serves as cofactor.

It carries out the reaction isochorismate + 2-oxoglutarate + H(+) = 5-enolpyruvoyl-6-hydroxy-2-succinyl-cyclohex-3-ene-1-carboxylate + CO2. Its pathway is quinol/quinone metabolism; 1,4-dihydroxy-2-naphthoate biosynthesis; 1,4-dihydroxy-2-naphthoate from chorismate: step 2/7. It functions in the pathway quinol/quinone metabolism; menaquinone biosynthesis. In terms of biological role, catalyzes the thiamine diphosphate-dependent decarboxylation of 2-oxoglutarate and the subsequent addition of the resulting succinic semialdehyde-thiamine pyrophosphate anion to isochorismate to yield 2-succinyl-5-enolpyruvyl-6-hydroxy-3-cyclohexene-1-carboxylate (SEPHCHC). This chain is 2-succinyl-5-enolpyruvyl-6-hydroxy-3-cyclohexene-1-carboxylate synthase, found in Vibrio vulnificus (strain CMCP6).